A 69-amino-acid chain; its full sequence is Putative membrane protein insertion efficiency factor (69 aa).

Belongs to the UPF0161 family.

It localises to the cell inner membrane. Its function is as follows. Could be involved in insertion of integral membrane proteins into the membrane. This chain is Putative membrane protein insertion efficiency factor, found in Laribacter hongkongensis (strain HLHK9).